We begin with the raw amino-acid sequence, 165 residues long: MNKTAIYPGTFDPITYGHLDIITRATKIFDSITIAISNNFTKKPIFNLKERIELTRKVTLHLKNVKKILGFNDLLANLAKKEKANILIRGVRTIFDFDYEIKLAAINKQIYPDLDSIFLLSSKEVSFISSSFVKEIAKYKGDIKPYLPKEAHSALLRKLNNDSIK.

Position 10 (threonine 10) interacts with substrate. ATP-binding positions include threonine 10 to phenylalanine 11 and histidine 18. The substrate site is built by lysine 42, leucine 75, and arginine 89. ATP is bound by residues glycine 90–arginine 92, glutamate 100, and valine 125–serine 131.

The protein belongs to the bacterial CoaD family. Homohexamer. It depends on Mg(2+) as a cofactor.

The protein localises to the cytoplasm. The catalysed reaction is (R)-4'-phosphopantetheine + ATP + H(+) = 3'-dephospho-CoA + diphosphate. The protein operates within cofactor biosynthesis; coenzyme A biosynthesis; CoA from (R)-pantothenate: step 4/5. Functionally, reversibly transfers an adenylyl group from ATP to 4'-phosphopantetheine, yielding dephospho-CoA (dPCoA) and pyrophosphate. The polypeptide is Phosphopantetheine adenylyltransferase (Buchnera aphidicola subsp. Acyrthosiphon pisum (strain 5A)).